The chain runs to 292 residues: Probable septum site-determining protein MinC (292 aa).

A disordered region spans residues Gln109–Thr188. Residues Gln140–Asp150 show a composition bias toward acidic residues. Positions Ala171–Leu185 are enriched in polar residues.

Belongs to the MinC family. Interacts with MinD and FtsZ.

In terms of biological role, cell division inhibitor that blocks the formation of polar Z ring septums. Rapidly oscillates between the poles of the cell to destabilize FtsZ filaments that have formed before they mature into polar Z rings. Prevents FtsZ polymerization. This is Probable septum site-determining protein MinC from Bordetella pertussis (strain Tohama I / ATCC BAA-589 / NCTC 13251).